A 104-amino-acid chain; its full sequence is Large ribosomal subunit protein uL24 (104 aa).

This sequence belongs to the universal ribosomal protein uL24 family. In terms of assembly, part of the 50S ribosomal subunit.

One of two assembly initiator proteins, it binds directly to the 5'-end of the 23S rRNA, where it nucleates assembly of the 50S subunit. In terms of biological role, one of the proteins that surrounds the polypeptide exit tunnel on the outside of the subunit. The polypeptide is Large ribosomal subunit protein uL24 (Pseudomonas syringae pv. syringae (strain B728a)).